The primary structure comprises 85 residues: Beta-mammal/insect toxin Lqhb1 (85 aa).

Positions 1–19 are cleaved as a signal peptide; that stretch reads MKIIIFLIVSSLMLIGVKT. The LCN-type CS-alpha/beta domain maps to 20–82; sequence DNGYLLNKAT…LWAYATNKCN (63 aa). Disulfide bonds link Cys-31-Cys-81, Cys-35-Cys-56, Cys-42-Cys-63, and Cys-46-Cys-65.

This sequence belongs to the long (4 C-C) scorpion toxin superfamily. Sodium channel inhibitor family. Expressed by the venom gland.

It localises to the secreted. In terms of biological role, beta toxins bind voltage-independently at site-4 of sodium channels (Nav) and shift the voltage of activation toward more negative potentials thereby affecting sodium channel activation and promoting spontaneous and repetitive firing. Competes, with apparent high affinity, with anti-insect and anti-mammalian beta-toxins for binding to cockroach and rat brain synaptosomes, respectively. Also competes with an anti-mammalian alpha-toxin on binding to rat brain sodium channels. Has a weak effect on cardiac sodium channels and a marked effect on rat brain and skeletal muscle sodium channels. In Leiurus hebraeus (Hebrew deathstalker scorpion), this protein is Beta-mammal/insect toxin Lqhb1.